Here is a 22-residue protein sequence, read N- to C-terminus: Peptide PGLa-B1 (22 aa).

Leucine amide is present on leucine 22.

Expressed by the skin glands.

It is found in the secreted. Functionally, has antibacterial and antifungal activity. This is Peptide PGLa-B1 from Xenopus borealis (Kenyan clawed frog).